The sequence spans 453 residues: Glucose N-acetyltransferase 1-B (453 aa).

At 1 to 8 (MLKRKVRY) the chain is on the cytoplasmic side. A helical; Signal-anchor for type II membrane protein transmembrane segment spans residues 9–29 (LLLIVVVFTGIILSVEAIMRF). Over 30–453 (QLNKNVDYYL…LESRAICQVN (424 aa)) the chain is Lumenal. Asn108, Asn126, and Asn176 each carry an N-linked (GlcNAc...) asparagine glycan. The DXD motif lies at 187 to 189 (DND).

The protein belongs to the GNT1 family.

The protein localises to the golgi apparatus membrane. It is found in the vacuole membrane. Functionally, N-acetylglucosaminyltransferase involved in the Golgi-specific modification of N-linked glycans. In Kluyveromyces lactis (strain ATCC 8585 / CBS 2359 / DSM 70799 / NBRC 1267 / NRRL Y-1140 / WM37) (Yeast), this protein is Glucose N-acetyltransferase 1-B (GNT1-B).